The sequence spans 332 residues: DNA-directed RNA polymerase subunit alpha (332 aa).

The tract at residues 1-234 is alpha N-terminal domain (alpha-NTD); the sequence is MTVTANQVLR…DQLSVFGDFT (234 aa). Positions 248–332 are alpha C-terminal domain (alpha-CTD); it reads VDPVLLRPID…AGVASHGMLG (85 aa).

This sequence belongs to the RNA polymerase alpha chain family. Homodimer. The RNAP catalytic core consists of 2 alpha, 1 beta, 1 beta' and 1 omega subunit. When a sigma factor is associated with the core the holoenzyme is formed, which can initiate transcription.

It carries out the reaction RNA(n) + a ribonucleoside 5'-triphosphate = RNA(n+1) + diphosphate. DNA-dependent RNA polymerase catalyzes the transcription of DNA into RNA using the four ribonucleoside triphosphates as substrates. The chain is DNA-directed RNA polymerase subunit alpha from Stenotrophomonas maltophilia (strain R551-3).